A 159-amino-acid chain; its full sequence is Protein-export protein SecB (159 aa).

Belongs to the SecB family. Homotetramer, a dimer of dimers. One homotetramer interacts with 1 SecA dimer.

Its subcellular location is the cytoplasm. Its function is as follows. One of the proteins required for the normal export of preproteins out of the cell cytoplasm. It is a molecular chaperone that binds to a subset of precursor proteins, maintaining them in a translocation-competent state. It also specifically binds to its receptor SecA. In Bartonella bacilliformis (strain ATCC 35685 / KC583 / Herrer 020/F12,63), this protein is Protein-export protein SecB.